The primary structure comprises 653 residues: Zinc finger protein 59 (653 aa).

Residues 14 to 86 form the KRAB domain; it reads VTFRDVAVDF…VNEETGRPSP (73 aa). 16 C2H2-type zinc fingers span residues 172 to 194, 200 to 222, 256 to 278, 284 to 306, 312 to 334, 340 to 362, 368 to 390, 396 to 418, 424 to 446, 452 to 474, 480 to 502, 508 to 530, 536 to 558, 564 to 586, 592 to 614, and 620 to 642; these read YECKECGKCFGCRSTLTQHQSVH, YECKECGKAFRLPQQLTRHQKCH, FACRECGKSFNRVSSLVEHGLIH, YECNECGKAFKRHRSFVRHQKIH, FQCKDCGKGFIVLAHLTRHQSSH, FECEECGKKFRTARHLVKHQRIH, FECNVCGSAFRLQLYLSEHQKTH, LECNVCGKAFRLQVYLSEHLKTH, FKCKLCGSAFPNKYQLNKHLTVH, YQCKECGKCFRQRSKLTEHESIH, FQCEECGKFFRLNTLLIHHQKSH, FECKECGKAFLLPSQLNSHKIVH, FECKVCGKSFKRESNLIQHGAVH, YECSECGKGFIHRSSLFHHRKIH, FKCQECGKAFVVLAYLIQHQSIH, and FECELCGSAFRCRSQLNKHLRIH.

The protein belongs to the krueppel C2H2-type zinc-finger protein family. Expressed predominantly in the testis (at protein level).

It localises to the nucleus. May have a role during differentiation processes. The protein is Zinc finger protein 59 (Zfp59) of Mus musculus (Mouse).